The sequence spans 510 residues: Pectinesterase 2 (510 aa).

An N-terminal signal peptide occupies residues 1-19 (MALRILITVSLVLFSLSHT). N-linked (GlcNAc...) asparagine glycans are attached at residues asparagine 110 and asparagine 158. Substrate-binding residues include threonine 275 and glutamine 305. The Proton donor role is filled by aspartate 328. A disulfide bond links cysteine 342 and cysteine 362. The active-site Nucleophile is the aspartate 349. Residues asparagine 371 and asparagine 385 are each glycosylated (N-linked (GlcNAc...) asparagine). Arginine 416 and tryptophan 418 together coordinate substrate.

It in the N-terminal section; belongs to the PMEI family. This sequence in the C-terminal section; belongs to the pectinesterase family. As to expression, expressed at low levels in young leaves, young bark, young fruit, mature fruit vesicles, shoots and flower buds, young bark and juice vesicles. In both leaf and fruit abscission zones, and mature leaves, expression was initially undetectable but increased markedly following ethylene treatment.

It is found in the secreted. It localises to the cell wall. It catalyses the reaction [(1-&gt;4)-alpha-D-galacturonosyl methyl ester](n) + n H2O = [(1-&gt;4)-alpha-D-galacturonosyl](n) + n methanol + n H(+). Its pathway is glycan metabolism; pectin degradation; 2-dehydro-3-deoxy-D-gluconate from pectin: step 1/5. In terms of biological role, acts in the modification of cell walls via demethylesterification of cell wall pectin. In Citrus sinensis (Sweet orange), this protein is Pectinesterase 2 (PECS-2.1).